Reading from the N-terminus, the 122-residue chain is Secreted RxLR effector protein 80 (122 aa).

The signal sequence occupies residues 1–21 (MKKRALPIVIFVISLQQSSQS). The RxLR signature appears at 72 to 75 (RSLR).

It belongs to the RxLR effector family.

Its subcellular location is the secreted. The protein resides in the host endoplasmic reticulum membrane. Secreted effector that dos not suppress the host cell death induced by cell death-inducing proteins. The polypeptide is Secreted RxLR effector protein 80 (Plasmopara viticola (Downy mildew of grapevine)).